A 408-amino-acid polypeptide reads, in one-letter code: Phosphoenolpyruvate/phosphate translocator 1, chloroplastic (408 aa).

Residues 1–66 constitute a chloroplast transit peptide; sequence MQSAAAVGLL…ISARRIGLVP (66 aa). 7 consecutive transmembrane segments (helical) span residues 105–125, 139–159, 165–185, 222–242, 245–262, 283–303, and 375–395; these read TLQLGALFGLWYLFNIYFNIY, ITNVQFAVGTVIALFMWITGI, ISGAQLAAILPLAMVHTMGNL, PTPFVVLSLVPIVGGVALASL, ASFNWAGFWSAMASNVTF, ITLFSIITVMSFFLLAPVTLL, and TPVSPINSLGTGVALAGVFLY. The 118-residue stretch at 124 to 241 folds into the EamA domain; sequence IYNKQVLKVF…PIVGGVALAS (118 aa).

It belongs to the TPT transporter family. PPT (TC 2.A.7.9) subfamily.

The protein resides in the plastid. The protein localises to the chloroplast membrane. Phosphoenolpyruvate/phosphate translocator that transports phosphoenolpyruvate (PEP) and dihydroxyacetone phosphate. This Oryza sativa subsp. japonica (Rice) protein is Phosphoenolpyruvate/phosphate translocator 1, chloroplastic (PPT1).